Reading from the N-terminus, the 83-residue chain is MLTIRLALGGSKKRPFYHLTVTDSRNPRDGSHKEQVGFFNPVARGQEIRLSVNQERVAYWLSVGAQPSERVAQLLKESAKAAA.

Belongs to the bacterial ribosomal protein bS16 family.

This is Small ribosomal subunit protein bS16 from Pseudomonas fluorescens (strain Pf0-1).